Here is a 156-residue protein sequence, read N- to C-terminus: Small ribosomal subunit protein uS7 (156 aa).

Belongs to the universal ribosomal protein uS7 family. As to quaternary structure, part of the 30S ribosomal subunit. Contacts proteins S9 and S11.

Its function is as follows. One of the primary rRNA binding proteins, it binds directly to 16S rRNA where it nucleates assembly of the head domain of the 30S subunit. Is located at the subunit interface close to the decoding center, probably blocks exit of the E-site tRNA. The polypeptide is Small ribosomal subunit protein uS7 (Synechococcus sp. (strain CC9605)).